Here is a 465-residue protein sequence, read N- to C-terminus: Asparagine--tRNA ligase (465 aa).

The protein belongs to the class-II aminoacyl-tRNA synthetase family. As to quaternary structure, homodimer.

It localises to the cytoplasm. It carries out the reaction tRNA(Asn) + L-asparagine + ATP = L-asparaginyl-tRNA(Asn) + AMP + diphosphate + H(+). The polypeptide is Asparagine--tRNA ligase (Clostridium perfringens (strain ATCC 13124 / DSM 756 / JCM 1290 / NCIMB 6125 / NCTC 8237 / Type A)).